The sequence spans 39 residues: Photosystem II reaction center protein J (39 aa).

The helical transmembrane segment at 9-29 threads the bilayer; it reads LWMVATVGGLAAGGLLILFVF.

The protein belongs to the PsbJ family. PSII is composed of 1 copy each of membrane proteins PsbA, PsbB, PsbC, PsbD, PsbE, PsbF, PsbH, PsbI, PsbJ, PsbK, PsbL, PsbM, PsbT, PsbX, PsbY, PsbZ, Psb30/Ycf12, at least 3 peripheral proteins of the oxygen-evolving complex and a large number of cofactors. It forms dimeric complexes.

Its subcellular location is the plastid. The protein localises to the chloroplast thylakoid membrane. One of the components of the core complex of photosystem II (PSII). PSII is a light-driven water:plastoquinone oxidoreductase that uses light energy to abstract electrons from H(2)O, generating O(2) and a proton gradient subsequently used for ATP formation. It consists of a core antenna complex that captures photons, and an electron transfer chain that converts photonic excitation into a charge separation. The sequence is that of Photosystem II reaction center protein J from Emiliania huxleyi (Coccolithophore).